The chain runs to 865 residues: SWI/SNF chromatin-remodeling complex subunit sol1 (865 aa).

Disordered regions lie at residues 1 to 34, 54 to 92, 116 to 143, and 163 to 183; these read MNNQGFVPASDYPTAVSYPTQGQSYNTQEEQPAY, MMNTSENEPNNLAHSQPFRQSPSTQRNLPNQSFDFASNG, QEKEAAMQQQQQQQQQQQLYQRQMQSRE, and VRQTPQPAPSPNTPSGNANQL. Residues 17–30 show a composition bias toward polar residues; the sequence is SYPTQGQSYNTQEE. Residues 121–139 are compositionally biased toward low complexity; it reads AMQQQQQQQQQQQLYQRQM. Positions 188–278 constitute an ARID domain; it reads AASFDKFMVS…YLLPYEEAWL (91 aa). The interval 288-380 is disordered; it reads QQAKANHSAN…QTSSSAAPVD (93 aa). A compositionally biased stretch (polar residues) spans 328–353; the sequence is HSKSPSPAFTANRFSPAAPTTVSSER. Positions 356–368 are enriched in pro residues; sequence PPYPSAPTRPTPP. A phosphoserine mark is found at Ser852 and Ser855.

Belongs to the SWI1 family. In terms of assembly, component of the SWI/SNF global transcription activator complex composed of at least arp9, arp42, snf5, snf22, snf30, sbf59, sol1, ssr1, ssr2, ssr3, ssr4 and tfg3.

The protein resides in the nucleus. Its function is as follows. Component of the SWI/SNF complex, an ATP-dependent chromatin remodeling complex, required for the positive and negative regulation of gene expression of a large number of genes. It changes chromatin structure by altering DNA-histone contacts within a nucleosome, leading eventually to a change in nucleosome position, thus facilitating or repressing binding of gene-specific transcription factors. This chain is SWI/SNF chromatin-remodeling complex subunit sol1 (sol1), found in Schizosaccharomyces pombe (strain 972 / ATCC 24843) (Fission yeast).